Reading from the N-terminus, the 200-residue chain is LHFPL tetraspan subfamily member 6 protein (200 aa).

Positions 1 to 23 are cleaved as a signal peptide; the sequence is MASSLTCTGVIWALLSFLSAATS. The next 3 helical transmembrane spans lie at 84-104, 123-143, and 166-186; these read ICTI…LTAL, GIQF…PLGW, and IGWA…LCTW.

It belongs to the LHFP family.

The protein resides in the membrane. This chain is LHFPL tetraspan subfamily member 6 protein, found in Mus musculus (Mouse).